Here is a 339-residue protein sequence, read N- to C-terminus: Ketol-acid reductoisomerase (NADP(+)) (339 aa).

In terms of domain architecture, KARI N-terminal Rossmann spans 1 to 182 (MRVYYDRDAD…GGGRSGVIET (182 aa)). NADP(+)-binding positions include 24-27 (YGSQ), Arg-48, Ser-51, Thr-53, and 83-86 (DELQ). His-108 is a catalytic residue. Residue Gly-134 participates in NADP(+) binding. One can recognise a KARI C-terminal knotted domain in the interval 183-328 (TFKEECETDL…EKLRGMMPWI (146 aa)). Residues Asp-191, Glu-195, Glu-227, and Glu-231 each contribute to the Mg(2+) site. Ser-252 is a binding site for substrate.

It belongs to the ketol-acid reductoisomerase family. Mg(2+) serves as cofactor.

The catalysed reaction is (2R)-2,3-dihydroxy-3-methylbutanoate + NADP(+) = (2S)-2-acetolactate + NADPH + H(+). The enzyme catalyses (2R,3R)-2,3-dihydroxy-3-methylpentanoate + NADP(+) = (S)-2-ethyl-2-hydroxy-3-oxobutanoate + NADPH + H(+). Its pathway is amino-acid biosynthesis; L-isoleucine biosynthesis; L-isoleucine from 2-oxobutanoate: step 2/4. It participates in amino-acid biosynthesis; L-valine biosynthesis; L-valine from pyruvate: step 2/4. Involved in the biosynthesis of branched-chain amino acids (BCAA). Catalyzes an alkyl-migration followed by a ketol-acid reduction of (S)-2-acetolactate (S2AL) to yield (R)-2,3-dihydroxy-isovalerate. In the isomerase reaction, S2AL is rearranged via a Mg-dependent methyl migration to produce 3-hydroxy-3-methyl-2-ketobutyrate (HMKB). In the reductase reaction, this 2-ketoacid undergoes a metal-dependent reduction by NADPH to yield (R)-2,3-dihydroxy-isovalerate. The polypeptide is Ketol-acid reductoisomerase (NADP(+)) (Brucella anthropi (strain ATCC 49188 / DSM 6882 / CCUG 24695 / JCM 21032 / LMG 3331 / NBRC 15819 / NCTC 12168 / Alc 37) (Ochrobactrum anthropi)).